Consider the following 558-residue polypeptide: PE cleavage protein A (558 aa).

In terms of domain architecture, PE spans 1-93 (MSFLVVVPEF…SGSYAAAEAT (93 aa)). Residue Asp297 is part of the active site.

It belongs to the mycobacterial PE family. PGRS subfamily. Post-translationally, undergoes auto-proteolytic processing.

The protein resides in the secreted. The protein localises to the cell surface. Aspartic protease that processes the lipase LipY and other PE_PGRS proteins. Can also cleave itself. This is PE cleavage protein A from Mycobacterium tuberculosis (strain CDC 1551 / Oshkosh).